A 582-amino-acid polypeptide reads, in one-letter code: V-type ATP synthase alpha chain (582 aa).

231–238 contributes to the ATP binding site; that stretch reads GPFGSGKT.

This sequence belongs to the ATPase alpha/beta chains family.

The catalysed reaction is ATP + H2O + 4 H(+)(in) = ADP + phosphate + 5 H(+)(out). In terms of biological role, produces ATP from ADP in the presence of a proton gradient across the membrane. The V-type alpha chain is a catalytic subunit. The chain is V-type ATP synthase alpha chain from Deinococcus deserti (strain DSM 17065 / CIP 109153 / LMG 22923 / VCD115).